Consider the following 357-residue polypeptide: tRNA N6-adenosine threonylcarbamoyltransferase (357 aa).

Fe cation contacts are provided by H119 and H123. Residues 141-145, D174, G187, and N284 contribute to the substrate site; that span reads LISGG. D312 is a Fe cation binding site.

This sequence belongs to the KAE1 / TsaD family. Requires Fe(2+) as cofactor.

The protein resides in the cytoplasm. The catalysed reaction is L-threonylcarbamoyladenylate + adenosine(37) in tRNA = N(6)-L-threonylcarbamoyladenosine(37) in tRNA + AMP + H(+). Required for the formation of a threonylcarbamoyl group on adenosine at position 37 (t(6)A37) in tRNAs that read codons beginning with adenine. Is involved in the transfer of the threonylcarbamoyl moiety of threonylcarbamoyl-AMP (TC-AMP) to the N6 group of A37, together with TsaE and TsaB. TsaD likely plays a direct catalytic role in this reaction. The protein is tRNA N6-adenosine threonylcarbamoyltransferase of Pelagibacter ubique (strain HTCC1062).